The sequence spans 120 residues: U13-lycotoxin-Ls1c (120 aa).

The signal sequence occupies residues 1–16 (MKILFVLISILYAVYC). A propeptide spanning residues 17–54 (FSSEEDVDSAYLANELEPVEDINSEQYAALEPKEEQER) is cleaved from the precursor. 3 disulfide bridges follow: Cys-56–Cys-70, Cys-69–Cys-87, and Cys-78–Cys-85. Residues 56–95 (CADMGQDRKDDCDCCLNIATCNCWFGRYFCSCTFGDYQTC) enclose the Agouti domain.

The protein belongs to the neurotoxin 05 (agouti) family. In terms of processing, contains 5 disulfide bonds. In terms of tissue distribution, expressed by the venom gland.

Its subcellular location is the secreted. This is U13-lycotoxin-Ls1c from Lycosa singoriensis (Wolf spider).